The sequence spans 115 residues: Macroconotoxin Mu8.1 (115 aa).

The N-terminal stretch at 1 to 21 (MDMKMTFSGLVLVVLVTTVVG) is a signal peptide. Positions 22–26 (SSVRR) are excised as a propeptide. 5 disulfides stabilise this stretch: cysteine 36-cysteine 77, cysteine 44-cysteine 60, cysteine 48-cysteine 56, cysteine 83-cysteine 115, and cysteine 87-cysteine 97. Glutamate 40 lines the Zn(2+) pocket. Histidine 68 contacts Zn(2+).

As to quaternary structure, mostly found as a homodimer in solution; non-covalently bound. Expressed by the venom duct.

It localises to the secreted. In terms of biological role, modestly and reversibly inhibits Cav2.3/CACNA1E (IC(50)=5.8 uM) recombinantly expressed in HEK293 cells without affecting the voltage dependence of activation. In mouse DRG sensory neurons, modulates depolarization-induced calcium influx. This chain is Macroconotoxin Mu8.1, found in Conus mucronatus (Pointed cone).